A 701-amino-acid polypeptide reads, in one-letter code: Reverse gyrase subunit A (701 aa).

Residues 41-197 form the Toprim domain; it reads MVLFIVESPN…NIYRAEFHEV (157 aa). Glu47 contributes to the Mg(2+) binding site. An RG C-terminal-type zinc finger spans residues 117 to 143; it reads IKKCLDCGHQFVDEDKCPRCGSENIDD. The Zn(2+) site is built by Cys120, Cys123, Cys133, and Cys136. Residue Asp166 coordinates Mg(2+). Positions 213 to 602 constitute a Topo IA-type catalytic domain; the sequence is NTNRVKAQLV…SFKKELIEIW (390 aa). Residue Tyr352 is the O-(5'-phospho-DNA)-tyrosine intermediate of the active site.

Belongs to the type IA topoisomerase family. Heterodimer of an RgyA and RgyB subunit. Zn(2+) is required as a cofactor. It depends on Mg(2+) as a cofactor.

The protein resides in the cytoplasm. Its function is as follows. Modifies the topological state of DNA by introducing positive supercoils in an ATP-dependent process. Binds to single-stranded DNA, transiently cleaves and then rejoins the end, introducing a positive supercoil in the process. The scissile phosphodiester is attacked by the catalytic tyrosine of the enzyme, resulting in the formation of a DNA-(5'-phosphotyrosyl)-enzyme intermediate. Probably involved in rewinding DNA strands in regions of the chromosome that have opened up to allow replication, transcription, DNA repair or for DNA protection. Reconstituted holoenzyme binds dsDNA a bit better than ssDNA, this subunit preferentially binds ssDNA. In isolation this subunit relaxes negatively-supercoiled DNA, and stimulates the endogenous ATPase activity of the RgyB subunit. The sequence is that of Reverse gyrase subunit A from Nanoarchaeum equitans (strain Kin4-M).